The following is a 271-amino-acid chain: Monalysin (271 aa).

Positions 1–33 (MTIKEELGQPQSHSIELDEVSKEAASTRAALTS) are excised as a propeptide. Positions 102 to 170 (IPQNVTTTLS…FTDTTEMKGP (69 aa)) are pore-forming domain.

As to quaternary structure, pro-Monalysin forms a stable donut-like 18-mer complex composed of two disk-shaped nonamers held together by N-terminal swapping of the pro-peptides. After proteolytic cleavage, the inactive 18-mer complex probably dissociates into two disk-shaped active nonamers in which the transmembrane segments are unmasked and ready to engage the conformational change leading to the pore formation into the target membrane. Multimerizes into circular-like structures and barrel-like aggregates. In terms of processing, requires N-terminal cleavage to become fully active. The metalloprotease AprA can induce the rapid cleavage of pro-Monalysin into its active form. Can also be processed by trypsin.

Its subcellular location is the secreted. The protein localises to the host cell membrane. In terms of biological role, pore-forming toxin that contributes to the virulence of P.entomophila against Drosophila, playing an important role in host intestinal damage and lethality. Displays cytolytic and hemolytic activity. The polypeptide is Monalysin (Pseudomonas entomophila (strain L48)).